The following is a 64-amino-acid chain: Conotoxin Tx3.5-a (64 aa).

The N-terminal stretch at 1 to 19 is a signal peptide; sequence MSKLGVLLTICLLLFPLTA. A propeptide spanning residues 20-47 is cleaved from the precursor; sequence LPLDGDQPADQAAERMQAEQHPLFDQKR. Disulfide bonds link cysteine 49–cysteine 58, cysteine 50–cysteine 62, and cysteine 54–cysteine 63. The residue at position 63 (cysteine 63) is a Cysteine amide.

It belongs to the conotoxin M superfamily. In terms of processing, contains 3 disulfide bonds. Two peptides are produced from this precursor. Conotoxin Tx3.5-b is amidated at Cys-63, conotoxin Tx3.5-a has an unmodified C-terminus. Expressed by the venom duct. Is present in all duct parts with a highest content in part 2 (proximal of the venom bulb) and then decreases in concentration toward the end of the duct.

It localises to the secreted. The chain is Conotoxin Tx3.5-a from Conus textile (Cloth-of-gold cone).